A 394-amino-acid chain; its full sequence is Dimethyladenosine transferase 2, mitochondrial (394 aa).

The N-terminal 19 residues, 1–19, are a transit peptide targeting the mitochondrion; it reads MWVPGAGIPSRLTLSAFTR. Positions 75, 123, and 149 each coordinate S-adenosyl-L-methionine. Residues 326 to 327 form a DNA-binding region; sequence KR.

Belongs to the class I-like SAM-binding methyltransferase superfamily. rRNA adenine N(6)-methyltransferase family. KsgA subfamily. In terms of assembly, homodimer. Component of the mitochondrial transcription initiation complex, composed at least of TFB2M, TFAM and POLRMT. In this complex TFAM recruits POLRMT to the promoter whereas TFB2M induces structural changes in POLRMT to enable promoter opening and trapping of the DNA non-template strand. Interacts with mitochondrial RNA polymerase POLRMT. Interacts with TFAM.

The protein localises to the mitochondrion. The catalysed reaction is adenosine in rRNA + S-adenosyl-L-methionine = N(6)-methyladenosine in rRNA + S-adenosyl-L-homocysteine + H(+). Its function is as follows. S-adenosyl-L-methionine-dependent rRNA methyltransferase which may methylate two specific adjacent adenosines in the loop of a conserved hairpin near the 3'-end of 12S mitochondrial rRNA. Component of the mitochondrial transcription initiation complex, composed at least of TFB2M, TFAM and POLRMT that is required for basal transcription of mitochondrial DNA. In this complex TFAM recruits POLRMT to a specific promoter whereas TFB2M induces structural changes in POLRMT to enable promoter opening and trapping of the DNA non-template strand. Stimulates transcription independently of the methyltransferase activity. The protein is Dimethyladenosine transferase 2, mitochondrial of Bos taurus (Bovine).